A 362-amino-acid chain; its full sequence is Apelin receptor A (362 aa).

The Extracellular segment spans residues 1–37 (METEGLSPMLYEDDYYYGNETGLQPCDETDWDFSYSL). Asn19 carries an N-linked (GlcNAc...) asparagine glycan. 2 disulfide bridges follow: Cys26-Cys286 and Cys108-Cys185. Residues 38–58 (LPVFYMIVFVLGLSGNGVVIF) traverse the membrane as a helical segment. Topologically, residues 59-76 (TVWKSKPKRRSADTYIGN) are cytoplasmic. Residues 77-97 (LALADLAFVVTLPLWATYTAL) traverse the membrane as a helical segment. Residues 98-110 (GFHWPFGSALCKL) are Extracellular-facing. A helical membrane pass occupies residues 111-131 (SSYLVLLNMFASVFCLTCLSF). Over 132–151 (DRYLAIVHSLSSAKLRSRSS) the chain is Cytoplasmic. Residues 152–172 (IIVSLAVIWLFSGLLALPSLI) traverse the membrane as a helical segment. The Extracellular portion of the chain corresponds to 173–199 (LRDTRVEGNNTICDLDFSGVSSKENEN). Asn181 carries N-linked (GlcNAc...) asparagine glycosylation. A helical membrane pass occupies residues 200 to 220 (FWIGGLSILTTVPGFLLPLLL). Residues 221 to 248 (MTIFYCFIGGKVTMHFQNLKKEEQKKKR) lie on the Cytoplasmic side of the membrane. Residues 249–269 (LLKIIITLVVVFAICWLPFHI) traverse the membrane as a helical segment. The Extracellular portion of the chain corresponds to 270-296 (LKTIHFLDLMGFLELSCSTQNIIVSLH). The chain crosses the membrane as a helical span at residues 297–317 (PYATCLAYVNSCLNPFLYAFF). At 318-362 (DLRFRSQCFFFFGFKKVLQGHLSNTSSSLSAQTQKSEIHSLATKV) the chain is on the cytoplasmic side.

This sequence belongs to the G-protein coupled receptor 1 family. As to expression, expressed in all blood vessels including the posterior cardinal vein, intersomitic veins and the vitelline vein network. At the gastrula stage, exclusively expressed in the mesodermal layer and at the neurula stage in the lateral plate mesoderm. Larval expression is observed in the endothelium of the primary blood vessels and the forming heart.

It is found in the cell membrane. Its function is as follows. G protein-coupled receptor for peptide hormones apelin (apln) and apelin receptor early endogenous ligand (apela), that plays a role in the regulation of normal cardiovascular function and fluid homeostasis. When acting as apelin receptor, activates both G(i) protein pathway that inhibits adenylate cyclase activity, and the beta-arrestin pathway that promotes internalization of the receptor. Also functions as mechanoreceptor that is activated by pathological stimuli in a G-protein-independent fashion to induce beta-arrestin signaling, hence eliciting cardiac hypertrophy. However, the presence of apelin ligand blunts cardiac hypertrophic induction from APLNR/APJ on response to pathological stimuli. Plays a key role in early development such as gastrulation, blood vessels formation and heart morphogenesis by acting as a receptor for apela hormone, promoting endoderm and mesendoderm cell migration and regulating the migration of cells fated to become myocardial progenitors, respectively. Promotes angioblast migration toward the embryonic midline, i.e. the position of the future vessel formation, during vasculogenesis. May promote sinus venosus (SV)-derived endothelial cells migration into the developing heart to promote coronary blood vessel development. Required for cardiovascular development, particularly for intersomitic vein angiogenesis by acting as a receptor for apln hormone. Also plays a role in various processes in adults such as regulation of blood vessel formation, blood pressure, heart contractility, and heart failure. Acts upstream of the i/o type of G-alpha proteins in the differentiation of endothelium, erythroid cells, myeloid cells and cardiomyocytes. The polypeptide is Apelin receptor A (aplnr-a) (Xenopus laevis (African clawed frog)).